Reading from the N-terminus, the 408-residue chain is MEEVIERFLKYVKFDTQSDENSNTVPSTDKQLKLGKNLVEELKEIGLSGVSIDDNGYVMAYLPANIEKNVPALGFISHMDTSPDMSGENVNPQFVKNYDGNDIVLNKDKNIVLSPKDFPEILKYKGKTLITTDGNTLLGADDKAGIAEIITAISYISKHPEIKHGKICIGFTPDEEVGRGADYFDVKKFGADVAYTVDGGDFGELEYENFNAASAKITVHGRNVHPGSAKDKMINSISVAEEFMRLMPKEQAPEYTEGYEGFYHIVDFQGSVEETKLQYIIRDFSKNKFEDKKKLMLDAAKFINEKYGRNLVEIEVKDQYYNMKEKIDEVKYVVDIAYKAMEEVEVKPLVRPIRGGTDGARLSFMGLPTPNLFTGGVNFHGKFEYIPTFAMEKAVEVIVKIVELYAEK.

H78 is a Zn(2+) binding site. Residue D80 is part of the active site. D141 contacts Zn(2+). E175 (proton acceptor) is an active-site residue. Positions 176, 198, and 380 each coordinate Zn(2+).

Belongs to the peptidase M20B family. Requires Zn(2+) as cofactor.

The protein localises to the cytoplasm. It carries out the reaction Release of the N-terminal residue from a tripeptide.. In terms of biological role, cleaves the N-terminal amino acid of tripeptides. This Clostridium acetobutylicum (strain ATCC 824 / DSM 792 / JCM 1419 / IAM 19013 / LMG 5710 / NBRC 13948 / NRRL B-527 / VKM B-1787 / 2291 / W) protein is Peptidase T.